The chain runs to 1903 residues: Plexin-A4 (1903 aa).

The signal sequence occupies residues 1–26 (MAFHNRRWNFTFSCCVVVLLLPLVAA). The Sema domain occupies 27 to 515 (RPQQPSAATR…SESQLTRVPV (489 aa)). The Extracellular segment spans residues 27-1246 (RPQQPSAATR…ITSDSPLSST (1220 aa)). Disulfide bonds link Cys97–Cys106 and Cys132–Cys140. Asn166 is a glycosylation site (N-linked (GlcNAc...) asparagine). Cystine bridges form between Cys291-Cys413, Cys307-Cys364, and Cys382-Cys401. Asn450 carries N-linked (GlcNAc...) asparagine glycosylation. Positions 517–567 (ACEQYSSCNECLGSGDPHCGWCVLHSMCTRKEKCERSSEPRRFASNIKQCV) constitute a PSI 1 domain. Disulfide bonds link Cys518/Cys535, Cys524/Cys566, Cys527/Cys544, and Cys538/Cys550. N-linked (GlcNAc...) asparagine glycosylation is found at Asn575 and Asn600. Cys601 and Cys620 are oxidised to a cystine. Residues Asn656, Asn663, Asn764, and Asn772 are each glycosylated (N-linked (GlcNAc...) asparagine). Residues 663-710 (NCSVHKSCLSCVGSPYQCHWCKYRHTCTHDPSSCSFQEGRVKQPEECP) form the PSI 2 domain. Positions 811–864 (KCDARRESCGLCLKADPLFGCVWCKGENRCSLKQHCSYPQSMWLEHNGINSKCT) constitute a PSI 3 domain. IPT/TIG domains lie at 866–960 (PRIT…YYFV), 962–1046 (PQLL…FEYV), 1049–1148 (PTIT…FVYY), and 1151–1246 (PVFE…LSST). Asn981, Asn992, Asn1025, Asn1141, Asn1189, and Asn1214 each carry an N-linked (GlcNAc...) asparagine glycan. Residues 1247–1267 (AVISIAGAGGLLIFFIVIVLI) form a helical membrane-spanning segment. Over 1268–1903 (AYKRKSRESD…QVVAFMSLES (636 aa)) the chain is Cytoplasmic.

It belongs to the plexin family.

Its subcellular location is the cell membrane. Its function is as follows. Involved in the development of primary sensory neurons especially in branching of the peripheral axons. Interacts with the SLIT2 signaling specifically to promote axonal branching of Rohon-Beard neurons and the trigeminal sensory ganglion neurons. The chain is Plexin-A4 (plxna4) from Danio rerio (Zebrafish).